The primary structure comprises 743 residues: 1,4-alpha-glucan branching enzyme GlgB (743 aa).

The active-site Nucleophile is aspartate 416. The active-site Proton donor is the glutamate 469.

It belongs to the glycosyl hydrolase 13 family. GlgB subfamily. As to quaternary structure, monomer.

The catalysed reaction is Transfers a segment of a (1-&gt;4)-alpha-D-glucan chain to a primary hydroxy group in a similar glucan chain.. Its pathway is glycan biosynthesis; glycogen biosynthesis. In terms of biological role, catalyzes the formation of the alpha-1,6-glucosidic linkages in glycogen by scission of a 1,4-alpha-linked oligosaccharide from growing alpha-1,4-glucan chains and the subsequent attachment of the oligosaccharide to the alpha-1,6 position. The protein is 1,4-alpha-glucan branching enzyme GlgB of Shewanella baltica (strain OS185).